The following is a 463-amino-acid chain: Bifunctional protein HldE (463 aa).

Positions 1–313 (MTGPMAVRTD…RALAALPDTD (313 aa)) are ribokinase. Aspartate 258 is an active-site residue. The segment at 331-463 (AAGGCFDLLH…LLARAAEGAR (133 aa)) is cytidylyltransferase.

It in the N-terminal section; belongs to the carbohydrate kinase PfkB family. In the C-terminal section; belongs to the cytidylyltransferase family. Homodimer.

The catalysed reaction is D-glycero-beta-D-manno-heptose 7-phosphate + ATP = D-glycero-beta-D-manno-heptose 1,7-bisphosphate + ADP + H(+). The enzyme catalyses D-glycero-beta-D-manno-heptose 1-phosphate + ATP + H(+) = ADP-D-glycero-beta-D-manno-heptose + diphosphate. It participates in nucleotide-sugar biosynthesis; ADP-L-glycero-beta-D-manno-heptose biosynthesis; ADP-L-glycero-beta-D-manno-heptose from D-glycero-beta-D-manno-heptose 7-phosphate: step 1/4. Its pathway is nucleotide-sugar biosynthesis; ADP-L-glycero-beta-D-manno-heptose biosynthesis; ADP-L-glycero-beta-D-manno-heptose from D-glycero-beta-D-manno-heptose 7-phosphate: step 3/4. Functionally, catalyzes the phosphorylation of D-glycero-D-manno-heptose 7-phosphate at the C-1 position to selectively form D-glycero-beta-D-manno-heptose-1,7-bisphosphate. Its function is as follows. Catalyzes the ADP transfer from ATP to D-glycero-beta-D-manno-heptose 1-phosphate, yielding ADP-D-glycero-beta-D-manno-heptose. The polypeptide is Bifunctional protein HldE (Streptomyces coelicolor (strain ATCC BAA-471 / A3(2) / M145)).